Here is a 179-residue protein sequence, read N- to C-terminus: MSRLQEKYNKEVIPALMEKFGYKNIMQVPKLEKIVVNMGVGEAKDNSKVLESAIADLQQITGQKPVITRAKKSVANFKIRQNMPIGCKVTLRKDMMFEFADKLMNIALPRVRDFRGVSAKSFDGRGNYALGIKEQIIFPEIEYDKIDKVRGMDIIFVTTAKTDEEARELLRYLGMPFAQ.

It belongs to the universal ribosomal protein uL5 family. As to quaternary structure, part of the 50S ribosomal subunit; part of the 5S rRNA/L5/L18/L25 subcomplex. Contacts the 5S rRNA and the P site tRNA. Forms a bridge to the 30S subunit in the 70S ribosome.

In terms of biological role, this is one of the proteins that bind and probably mediate the attachment of the 5S RNA into the large ribosomal subunit, where it forms part of the central protuberance. In the 70S ribosome it contacts protein S13 of the 30S subunit (bridge B1b), connecting the 2 subunits; this bridge is implicated in subunit movement. Contacts the P site tRNA; the 5S rRNA and some of its associated proteins might help stabilize positioning of ribosome-bound tRNAs. The protein is Large ribosomal subunit protein uL5 of Clostridium novyi (strain NT).